A 416-amino-acid polypeptide reads, in one-letter code: Tryptophan synthase beta chain (416 aa).

The residue at position 109 (K109) is an N6-(pyridoxal phosphate)lysine.

Belongs to the TrpB family. In terms of assembly, tetramer of two alpha and two beta chains. The cofactor is pyridoxal 5'-phosphate.

The catalysed reaction is (1S,2R)-1-C-(indol-3-yl)glycerol 3-phosphate + L-serine = D-glyceraldehyde 3-phosphate + L-tryptophan + H2O. Its pathway is amino-acid biosynthesis; L-tryptophan biosynthesis; L-tryptophan from chorismate: step 5/5. The beta subunit is responsible for the synthesis of L-tryptophan from indole and L-serine. The protein is Tryptophan synthase beta chain of Mesorhizobium japonicum (strain LMG 29417 / CECT 9101 / MAFF 303099) (Mesorhizobium loti (strain MAFF 303099)).